We begin with the raw amino-acid sequence, 222 residues long: Phosphoribosylformylglycinamidine synthase subunit PurQ (222 aa).

Residues 2–222 (SVAIVRFPGT…DNLLHIAEMK (221 aa)) form the Glutamine amidotransferase type-1 domain. Cysteine 86 functions as the Nucleophile in the catalytic mechanism. Residues histidine 194 and glutamate 196 contribute to the active site.

Part of the FGAM synthase complex composed of 1 PurL, 1 PurQ and 2 PurS subunits.

It localises to the cytoplasm. It catalyses the reaction N(2)-formyl-N(1)-(5-phospho-beta-D-ribosyl)glycinamide + L-glutamine + ATP + H2O = 2-formamido-N(1)-(5-O-phospho-beta-D-ribosyl)acetamidine + L-glutamate + ADP + phosphate + H(+). The enzyme catalyses L-glutamine + H2O = L-glutamate + NH4(+). Its pathway is purine metabolism; IMP biosynthesis via de novo pathway; 5-amino-1-(5-phospho-D-ribosyl)imidazole from N(2)-formyl-N(1)-(5-phospho-D-ribosyl)glycinamide: step 1/2. Part of the phosphoribosylformylglycinamidine synthase complex involved in the purines biosynthetic pathway. Catalyzes the ATP-dependent conversion of formylglycinamide ribonucleotide (FGAR) and glutamine to yield formylglycinamidine ribonucleotide (FGAM) and glutamate. The FGAM synthase complex is composed of three subunits. PurQ produces an ammonia molecule by converting glutamine to glutamate. PurL transfers the ammonia molecule to FGAR to form FGAM in an ATP-dependent manner. PurS interacts with PurQ and PurL and is thought to assist in the transfer of the ammonia molecule from PurQ to PurL. The sequence is that of Phosphoribosylformylglycinamidine synthase subunit PurQ from Helicobacter hepaticus (strain ATCC 51449 / 3B1).